The chain runs to 974 residues: Exocyst complex component 4 (974 aa).

Position 2 is an N-acetylalanine (Ala2). An N6-acetyllysine modification is found at Lys9. 2 positions are modified to phosphoserine: Ser32 and Ser226. Residues 32 to 114 adopt a coiled-coil conformation; the sequence is STSDDVEDRE…HCKRDELRKL (83 aa). Thr233 and Thr237 each carry phosphothreonine. Phosphoserine is present on Ser468.

This sequence belongs to the SEC8 family. As to quaternary structure, the exocyst complex is composed of EXOC1, EXOC2, EXOC3, EXOC4, EXOC5, EXOC6, EXOC7 and EXOC8. Interacts with BIRC6/bruce. Interacts with MYRIP. Interacts with SH3BP1; required for the localization of both SH3BP1 and the exocyst to the leading edge of migrating cells. Interacts with SLC6A9.

The protein resides in the midbody. The protein localises to the midbody ring. It localises to the cell projection. Its subcellular location is the cytoplasm. It is found in the cytoskeleton. The protein resides in the microtubule organizing center. The protein localises to the centrosome. Functionally, component of the exocyst complex involved in the docking of exocytic vesicles with fusion sites on the plasma membrane. The sequence is that of Exocyst complex component 4 (EXOC4) from Homo sapiens (Human).